A 194-amino-acid chain; its full sequence is uncharacterized protein (194 aa).

This is an uncharacterized protein from Ostreid herpesvirus 1 (isolate France) (OsHV-1).